The chain runs to 218 residues: N-(5'-phosphoribosyl)anthranilate isomerase (218 aa).

This sequence belongs to the TrpF family.

The catalysed reaction is N-(5-phospho-beta-D-ribosyl)anthranilate = 1-(2-carboxyphenylamino)-1-deoxy-D-ribulose 5-phosphate. The protein operates within amino-acid biosynthesis; L-tryptophan biosynthesis; L-tryptophan from chorismate: step 3/5. The polypeptide is N-(5'-phosphoribosyl)anthranilate isomerase (Bordetella parapertussis (strain 12822 / ATCC BAA-587 / NCTC 13253)).